The following is a 206-amino-acid chain: Small ribosomal subunit protein uS4 (206 aa).

Residues 96-158 (SRLDNVVYRM…AKKQLRIQNA (63 aa)) form the S4 RNA-binding domain.

It belongs to the universal ribosomal protein uS4 family. Part of the 30S ribosomal subunit. Contacts protein S5. The interaction surface between S4 and S5 is involved in control of translational fidelity.

Its function is as follows. One of the primary rRNA binding proteins, it binds directly to 16S rRNA where it nucleates assembly of the body of the 30S subunit. Functionally, with S5 and S12 plays an important role in translational accuracy. This Francisella tularensis subsp. tularensis (strain FSC 198) protein is Small ribosomal subunit protein uS4.